Reading from the N-terminus, the 422-residue chain is Histidine--tRNA ligase (422 aa).

This sequence belongs to the class-II aminoacyl-tRNA synthetase family. As to quaternary structure, homodimer.

The protein localises to the cytoplasm. The enzyme catalyses tRNA(His) + L-histidine + ATP = L-histidyl-tRNA(His) + AMP + diphosphate + H(+). The chain is Histidine--tRNA ligase from Vibrio campbellii (strain ATCC BAA-1116).